The sequence spans 216 residues: Probable GTP-binding protein EngB (216 aa).

An EngB-type G domain is found at 27–201; sequence EGIEVAFAGR…REKLDTWFSE (175 aa). Residues 35–42, 62–66, 80–83, 147–150, and 180–182 contribute to the GTP site; these read GRSNAGKS, GRTQL, DLPG, TKAD, and FSS. The Mg(2+) site is built by Ser-42 and Thr-64.

The protein belongs to the TRAFAC class TrmE-Era-EngA-EngB-Septin-like GTPase superfamily. EngB GTPase family. Requires Mg(2+) as cofactor.

Functionally, necessary for normal cell division and for the maintenance of normal septation. The sequence is that of Probable GTP-binding protein EngB from Yersinia pestis bv. Antiqua (strain Angola).